Consider the following 157-residue polypeptide: Endoribonuclease YbeY (157 aa).

Zn(2+) is bound by residues H114, H118, and H124.

It belongs to the endoribonuclease YbeY family. Zn(2+) is required as a cofactor.

It localises to the cytoplasm. Functionally, single strand-specific metallo-endoribonuclease involved in late-stage 70S ribosome quality control and in maturation of the 3' terminus of the 16S rRNA. The chain is Endoribonuclease YbeY from Yersinia pseudotuberculosis serotype O:3 (strain YPIII).